Consider the following 232-residue polypeptide: Phosphatidylserine decarboxylase proenzyme (232 aa).

Ser190 functions as the Schiff-base intermediate with substrate; via pyruvic acid in the catalytic mechanism. Ser190 carries the post-translational modification Pyruvic acid (Ser); by autocatalysis.

This sequence belongs to the phosphatidylserine decarboxylase family. PSD-A subfamily. Heterodimer of a large membrane-associated beta subunit and a small pyruvoyl-containing alpha subunit. It depends on pyruvate as a cofactor. In terms of processing, is synthesized initially as an inactive proenzyme. Formation of the active enzyme involves a self-maturation process in which the active site pyruvoyl group is generated from an internal serine residue via an autocatalytic post-translational modification. Two non-identical subunits are generated from the proenzyme in this reaction, and the pyruvate is formed at the N-terminus of the alpha chain, which is derived from the carboxyl end of the proenzyme. The post-translation cleavage follows an unusual pathway, termed non-hydrolytic serinolysis, in which the side chain hydroxyl group of the serine supplies its oxygen atom to form the C-terminus of the beta chain, while the remainder of the serine residue undergoes an oxidative deamination to produce ammonia and the pyruvoyl prosthetic group on the alpha chain.

The protein localises to the cell membrane. The catalysed reaction is a 1,2-diacyl-sn-glycero-3-phospho-L-serine + H(+) = a 1,2-diacyl-sn-glycero-3-phosphoethanolamine + CO2. Its pathway is phospholipid metabolism; phosphatidylethanolamine biosynthesis; phosphatidylethanolamine from CDP-diacylglycerol: step 2/2. Its function is as follows. Catalyzes the formation of phosphatidylethanolamine (PtdEtn) from phosphatidylserine (PtdSer). In Allorhizobium ampelinum (strain ATCC BAA-846 / DSM 112012 / S4) (Agrobacterium vitis (strain S4)), this protein is Phosphatidylserine decarboxylase proenzyme.